We begin with the raw amino-acid sequence, 1163 residues long: Rho GTPase-activating protein 45 (1163 aa).

The segment at M1–A99 is disordered. S23 and S25 each carry phosphoserine. Residues L55–A65 are compositionally biased toward basic and acidic residues. Phosphoserine occurs at positions 100, 120, and 126. Disordered regions lie at residues H118 to P137, P262 to P282, and E454 to R475. Residues E296–Q566 form the F-BAR domain. The stretch at E403 to D526 forms a coiled coil. Low complexity predominate over residues A458–K470. Phosphoserine is present on residues S596, S605, and S619. Residues D610–S695 form a disordered region. Positions K633 to H644 are enriched in basic residues. S646 carries the phosphoserine modification. Residues T673–T682 show a composition bias toward low complexity. The Phorbol-ester/DAG-type zinc finger occupies T729–C774. Residues Q788 to F1001 form the Rho-GAP domain. Phosphoserine occurs at positions 976, 1054, 1057, and 1059. 2 disordered regions span residues A1042–L1067 and S1087–V1163. The segment covering S1087–S1099 has biased composition (low complexity). Over residues S1125–Q1137 the composition is skewed to polar residues.

It localises to the cytoplasm. Its subcellular location is the cell projection. The protein localises to the ruffle membrane. In terms of biological role, contains a GTPase activator for the Rho-type GTPases (RhoGAP) domain that would be able to negatively regulate the actin cytoskeleton as well as cell spreading. However, also contains N-terminally a BAR-domin which is able to play an autoinhibitory effect on this RhoGAP activity. This chain is Rho GTPase-activating protein 45, found in Pongo abelii (Sumatran orangutan).